The primary structure comprises 423 residues: Methionine aminopeptidase 2 (423 aa).

Residues 1–17 (MTDVIDAKPEEAKKVPP) show a composition bias toward basic and acidic residues. A disordered region spans residues 1-89 (MTDVIDAKPE…IQPYKDDNAY (89 aa)). The segment covering 18–29 (EVEDEDSGDESA) has biased composition (acidic residues). Positions 41–54 (KKKKKKKKPKKKKK) are enriched in basic residues. His176 provides a ligand contact to substrate. Positions 196, 207, and 276 each coordinate a divalent metal cation. Position 284 (His284) interacts with substrate. The a divalent metal cation site is built by Glu309 and Glu404.

The protein belongs to the peptidase M24A family. Methionine aminopeptidase eukaryotic type 2 subfamily. The cofactor is Co(2+). Zn(2+) is required as a cofactor. Mn(2+) serves as cofactor. It depends on Fe(2+) as a cofactor.

It localises to the cytoplasm. It catalyses the reaction Release of N-terminal amino acids, preferentially methionine, from peptides and arylamides.. In terms of biological role, cotranslationally removes the N-terminal methionine from nascent proteins. The N-terminal methionine is often cleaved when the second residue in the primary sequence is small and uncharged (Met-Ala-, Cys, Gly, Pro, Ser, Thr, or Val). The sequence is that of Methionine aminopeptidase 2 from Schizophyllum commune (strain H4-8 / FGSC 9210) (Split gill fungus).